Consider the following 637-residue polypeptide: Probable potassium transport system protein Kup 2 (637 aa).

12 helical membrane passes run 18 to 38 (FLVL…TSPL), 61 to 81 (LISL…VLFL), 107 to 127 (MPVL…DAMI), 145 to 165 (PAFS…LFAV), 174 to 194 (AVFF…GGLI), 211 to 231 (ALWF…AVFL), 255 to 275 (WFIL…ALVL), 293 to 313 (ALFP…QAVI), 345 to 365 (IYVP…IFSF), 371 to 391 (LATA…LMAF), 402 to 422 (AFTA…FLAA), and 429 to 449 (DGGW…WTWT).

It belongs to the HAK/KUP transporter (TC 2.A.72) family.

It is found in the cell inner membrane. The catalysed reaction is K(+)(in) + H(+)(in) = K(+)(out) + H(+)(out). Functionally, transport of potassium into the cell. Likely operates as a K(+):H(+) symporter. The sequence is that of Probable potassium transport system protein Kup 2 from Agrobacterium fabrum (strain C58 / ATCC 33970) (Agrobacterium tumefaciens (strain C58)).